Here is a 255-residue protein sequence, read N- to C-terminus: Indole-3-glycerol phosphate synthase (255 aa).

The protein belongs to the TrpC family.

It catalyses the reaction 1-(2-carboxyphenylamino)-1-deoxy-D-ribulose 5-phosphate + H(+) = (1S,2R)-1-C-(indol-3-yl)glycerol 3-phosphate + CO2 + H2O. It functions in the pathway amino-acid biosynthesis; L-tryptophan biosynthesis; L-tryptophan from chorismate: step 4/5. The sequence is that of Indole-3-glycerol phosphate synthase from Streptococcus thermophilus (strain ATCC BAA-250 / LMG 18311).